A 424-amino-acid chain; its full sequence is Magnesium-chelatase subunit ChlI-1, chloroplastic (424 aa).

The N-terminal 60 residues, Met-1–Ser-60, are a transit peptide targeting the chloroplast. Position 61 is an N-acetylvaline (Val-61). Cystine bridges form between Cys-102/Cys-193 and Cys-354/Cys-396. Residue Gly-119–Ser-126 participates in ATP binding. At Ser-355 the chain carries Phosphoserine.

This sequence belongs to the Mg-chelatase subunits D/I family. As to quaternary structure, the magnesium chelatase complex is a heterotrimer consisting of subunits CHLI, CHLD and CHLH. Interacts with CHLH and CHLD.

It localises to the plastid. Its subcellular location is the chloroplast. The enzyme catalyses protoporphyrin IX + Mg(2+) + ATP + H2O = Mg-protoporphyrin IX + ADP + phosphate + 3 H(+). Its pathway is porphyrin-containing compound metabolism; chlorophyll biosynthesis. With respect to regulation, redox regulation; active in reducing conditions, inactive in oxidizing conditions. Thioredoxins f and m mediate the reversible reductive activation of oxidized CHLI1. Its function is as follows. Involved in chlorophyll biosynthesis. Catalyzes the insertion of magnesium ion into protoporphyrin IX to yield Mg-protoporphyrin IX. The magnesium-chelatase is a complex of three subunits, CHLI, CHLD and CHLH. The reaction takes place in two steps, with an ATP-dependent activation followed by an ATP-dependent chelation step. Possesses high affinity for ATP and may play a major role in chlorophyll biosynthesis. Does not bind abscisic acid (ABA), but is a positive regulator of ABA signaling. May be involved in ABA signaling in the control of stomatal aperture, but does not seem to have an effect on ABA-induced gene expression. This is Magnesium-chelatase subunit ChlI-1, chloroplastic (CHLI1) from Arabidopsis thaliana (Mouse-ear cress).